Reading from the N-terminus, the 619-residue chain is 1-deoxy-D-xylulose-5-phosphate synthase (619 aa).

Residues His-74 and 115-117 each bind thiamine diphosphate; that span reads GHS. Asp-146 is a Mg(2+) binding site. Thiamine diphosphate is bound by residues 147-148, Asn-175, and Tyr-285; that span reads GA. Asn-175 is a binding site for Mg(2+). Residues 289-312 form a disordered region; the sequence is EKSPSKYHAVPPRANEKEKPSKPC. The segment covering 302–312 has biased composition (basic and acidic residues); the sequence is ANEKEKPSKPC. Thiamine diphosphate is bound at residue Glu-365.

It belongs to the transketolase family. DXPS subfamily. In terms of assembly, homodimer. It depends on Mg(2+) as a cofactor. Thiamine diphosphate serves as cofactor.

It catalyses the reaction D-glyceraldehyde 3-phosphate + pyruvate + H(+) = 1-deoxy-D-xylulose 5-phosphate + CO2. The protein operates within metabolic intermediate biosynthesis; 1-deoxy-D-xylulose 5-phosphate biosynthesis; 1-deoxy-D-xylulose 5-phosphate from D-glyceraldehyde 3-phosphate and pyruvate: step 1/1. Functionally, catalyzes the acyloin condensation reaction between C atoms 2 and 3 of pyruvate and glyceraldehyde 3-phosphate to yield 1-deoxy-D-xylulose-5-phosphate (DXP). This chain is 1-deoxy-D-xylulose-5-phosphate synthase, found in Clostridium botulinum (strain Eklund 17B / Type B).